A 934-amino-acid polypeptide reads, in one-letter code: 2-oxoglutarate dehydrogenase E1 component (934 aa).

Positions 515-537 are enriched in basic and acidic residues; sequence RAAQDKIDKSDKMDNPDMERPES. The tract at residues 515 to 544 is disordered; sequence RAAQDKIDKSDKMDNPDMERPESLQEPLQS.

The protein belongs to the alpha-ketoglutarate dehydrogenase family. As to quaternary structure, homodimer. Part of the 2-oxoglutarate dehydrogenase (OGDH) complex composed of E1 (2-oxoglutarate dehydrogenase), E2 (dihydrolipoamide succinyltransferase) and E3 (dihydrolipoamide dehydrogenase); the complex contains multiple copies of the three enzymatic components (E1, E2 and E3). The cofactor is thiamine diphosphate.

The catalysed reaction is N(6)-[(R)-lipoyl]-L-lysyl-[protein] + 2-oxoglutarate + H(+) = N(6)-[(R)-S(8)-succinyldihydrolipoyl]-L-lysyl-[protein] + CO2. In terms of biological role, E1 component of the 2-oxoglutarate dehydrogenase (OGDH) complex which catalyzes the decarboxylation of 2-oxoglutarate, the first step in the conversion of 2-oxoglutarate to succinyl-CoA and CO(2). This Staphylococcus haemolyticus (strain JCSC1435) protein is 2-oxoglutarate dehydrogenase E1 component.